A 1636-amino-acid polypeptide reads, in one-letter code: Tyrosine-protein phosphatase non-receptor type 23 (1636 aa).

Positions 8-394 (PMIWLDLKEA…AKIEDKNEVL (387 aa)) constitute a BRO1 domain. TPR repeat units lie at residues 250–283 (AVAHLHMGKQAEEQQKFGERVAYFQSALDKLNEA) and 374–407 (EEKAKLLREMMAKIEDKNEVLDQFMDSMQLDPET). Residues 550 to 623 (KAVLQNLKRI…VYLEQNLAAQ (74 aa)) are a coiled coil. The span at 701–714 (EAARQQLLDRELKK) shows a compositional bias: basic and acidic residues. Disordered regions lie at residues 701 to 812 (EAAR…GPHA) and 888 to 1151 (QAPI…AAEG). Ser-733 carries the phosphoserine modification. Positions 770–1130 (HFPPSPFPSS…SSSPESQHGG (361 aa)) are his. 2 stretches are compositionally biased toward pro residues: residues 898 to 922 (RPNPTPAPPPPCFPVPPPQPLPTPY) and 950 to 962 (RIGPQPQPHPQPH). Residue Arg-950 is modified to Omega-N-methylarginine. 6 consecutive repeat copies span residues 953 to 954 (PQ), 955 to 956 (PQ), 957 to 958 (PH), 959 to 960 (PQ), 961 to 962 (PH), and 963 to 964 (PS). Positions 953–964 (PQPQPHPQPHPS) are 6 X 2 AA approximate tandem repeats of P-Q. Pro residues-rich tracts occupy residues 983–1002 (LFPPQAPGLLPPQSPYPYAP), 1036–1050 (FPSPGPPQPPHPPLA), and 1083–1109 (HLVPSPAPSPGPGPVPPRPPAAEPPPC). A compositionally biased stretch (polar residues) spans 1120–1131 (LSSSPESQHGGT). 2 positions are modified to phosphoserine: Ser-1122 and Ser-1123. Thr-1131 is modified (phosphothreonine). In terms of domain architecture, Tyrosine-protein phosphatase spans 1192-1452 (DTVWRELQDA…RFCYEAVVRH (261 aa)). Cys-1392 acts as the Phosphocysteine intermediate in catalysis. Positions 1513 to 1636 (LESPVASLPG…LDPLWTLNKT (124 aa)) are disordered. 2 stretches are compositionally biased toward pro residues: residues 1523–1533 (PAEPPGLPPAS) and 1542–1556 (SSSPPPLSSPLPEAP). Low complexity predominate over residues 1567 to 1587 (APSSGPPSSSLELLASLTPEA). Arg-1615 is subject to Omega-N-methylarginine.

Belongs to the protein-tyrosine phosphatase family. Non-receptor class subfamily. In terms of assembly, interacts with GRAP2 and GRB2. Interacts with UBAP1. Interacts with CHMP4B.

The protein resides in the nucleus. It is found in the cytoplasm. It localises to the cytoplasmic vesicle. The protein localises to the endosome. Its subcellular location is the cytoskeleton. The protein resides in the cilium basal body. It is found in the early endosome. It catalyses the reaction O-phospho-L-tyrosyl-[protein] + H2O = L-tyrosyl-[protein] + phosphate. In terms of biological role, plays a role in sorting of endocytic ubiquitinated cargos into multivesicular bodies (MVBs) via its interaction with the ESCRT-I complex (endosomal sorting complex required for transport I), and possibly also other ESCRT complexes. May act as a negative regulator of Ras-mediated mitogenic activity. Plays a role in ciliogenesis. This chain is Tyrosine-protein phosphatase non-receptor type 23 (PTPN23), found in Homo sapiens (Human).